Reading from the N-terminus, the 256-residue chain is UPF0280 protein MTH_727 (256 aa).

Belongs to the UPF0280 family.

This chain is UPF0280 protein MTH_727, found in Methanothermobacter thermautotrophicus (strain ATCC 29096 / DSM 1053 / JCM 10044 / NBRC 100330 / Delta H) (Methanobacterium thermoautotrophicum).